The chain runs to 273 residues: Small ribosomal subunit protein uS3 (273 aa).

Residues 40 to 110 (IRNLFFVNYR…NLDLTINEIG (71 aa)) enclose the KH type-2 domain. Positions 244–265 (QVLSANKLTGSDVETSSIQALT) are enriched in polar residues. The segment at 244 to 273 (QVLSANKLTGSDVETSSIQALTKPNKEDKQ) is disordered.

It belongs to the universal ribosomal protein uS3 family. As to quaternary structure, part of the 30S ribosomal subunit. Forms a tight complex with proteins S10 and S14.

In terms of biological role, binds the lower part of the 30S subunit head. Binds mRNA in the 70S ribosome, positioning it for translation. This chain is Small ribosomal subunit protein uS3, found in Mycoplasma pneumoniae (strain ATCC 29342 / M129 / Subtype 1) (Mycoplasmoides pneumoniae).